An 828-amino-acid chain; its full sequence is Deubiquitinase MYSM1 (828 aa).

Positions 1–12 are enriched in acidic residues; sequence MAAEEADVDIEG. A disordered region spans residues 1 to 31; that stretch reads MAAEEADVDIEGDVVAAAGAQPGSGENTASV. At Ser-110 the chain carries Phosphoserine. Residues 116–167 enclose the SANT domain; that stretch reads SYSVKWTIEEKELFEQGLAKFGRRWTKISKLIGSRTVLQVKSYARQYFKNKV. Residue Lys-187 forms a Glycyl lysine isopeptide (Lys-Gly) (interchain with G-Cter in SUMO2) linkage. Residue Ser-218 is modified to Phosphoserine. Residue Thr-236 is modified to Phosphothreonine. A phosphoserine mark is found at Ser-242, Ser-267, and Ser-340. Residues 372 to 470 form the SWIRM domain; that stretch reads LKPPEQEIEI…FGCEQAVYNR (99 aa). The MPN domain occupies 577–709; it reads VKVASEALLI…PLPYSQITCL (133 aa). The Zn(2+) site is built by His-656, His-658, and Asp-669. The short motif at 656-669 is the JAMM motif element; that stretch reads HSHPAFDPNPSLRD. The LXXLL motif motif lies at 774 to 778; it reads LQKLL.

This sequence belongs to the peptidase M67A family. MYSM1 subfamily. As to quaternary structure, component of a large chromatin remodeling complex, at least composed of MYSM1, PCAF, RBM10 and KIF11/TRIP5. Binds histones. Interacts with NFIL3; this interaction is critical for their correct recruitment to the ID2 locus during natural killer cell maturation.

It is found in the nucleus. The protein resides in the cytoplasm. Functionally, metalloprotease with deubiquitinase activity that plays important regulator roles in hematopoietic stem cell function, blood cell production and immune response. Participates in the normal programming of B-cell responses to antigen after the maturation process. Within the cytoplasm, plays critical roles in the repression of innate immunity and autoimmunity. Removes 'Lys-63'-linked polyubiquitins from TRAF3 and TRAF6 complexes. Attenuates NOD2-mediated inflammation and tissue injury by promoting 'Lys-63'-linked deubiquitination of RIPK2 component. Suppresses the CGAS-STING1 signaling pathway by cleaving STING1 'Lys-63'-linked ubiquitin chains. In the nucleus, acts as a hematopoietic transcription regulator derepressing a range of genes essential for normal stem cell differentiation including EBF1 and PAX5 in B-cells, ID2 in NK-cell progenitor or FLT3 in dendritic cell precursors. Deubiquitinates monoubiquitinated histone H2A, a specific tag for epigenetic transcriptional repression, leading to dissociation of histone H1 from the nucleosome. The protein is Deubiquitinase MYSM1 (MYSM1) of Homo sapiens (Human).